A 1093-amino-acid chain; its full sequence is Leukemia inhibitory factor receptor (1093 aa).

The first 43 residues, 1-43, serve as a signal peptide directing secretion; that stretch reads MGAFSWWRQPSWMADNKRGRMTPSLPWLLSALTLLHLMMHVNG. Residues 44 to 829 are Extracellular-facing; it reads LKRGVQQDLK…SMFVVTKENS (786 aa). The Fibronectin type-III 1 domain maps to 45–127; sequence KRGVQQDLKC…QSKFTLNEKD (83 aa). 2 cysteine pairs are disulfide-bonded: cysteine 54-cysteine 64 and cysteine 81-cysteine 89. Residues asparagine 165, asparagine 200, asparagine 239, and asparagine 262 are each glycosylated (N-linked (GlcNAc...) asparagine). 2 disulfide bridges follow: cysteine 209/cysteine 266 and cysteine 337/cysteine 347. 5 consecutive Fibronectin type-III domains span residues 331 to 428, 431 to 530, 534 to 625, 623 to 715, and 720 to 829; these read VPQK…ERVA, VPIS…TEAT, GPDT…IPND, PNDD…IGYI, and PIVA…KENS. Residues asparagine 386, asparagine 403, asparagine 422, asparagine 441, asparagine 454, and asparagine 477 are each glycosylated (N-linked (GlcNAc...) asparagine). Cysteines 462 and 507 form a disulfide. A WSXWS motif motif is present at residues 515 to 519; that stretch reads WSKWS. 6 N-linked (GlcNAc...) asparagine glycosylation sites follow: asparagine 568, asparagine 648, asparagine 659, asparagine 676, asparagine 725, and asparagine 783. A helical membrane pass occupies residues 830-850; sequence VGLIIAILIPVAVAVIVGVVT. The Cytoplasmic portion of the chain corresponds to 851–1093; the sequence is SILCYRKREW…TNFFQNKPND (243 aa). The Box 1 motif motif lies at 865 to 873; sequence FYPDIPNPE. Disordered stretches follow at residues 908–941 and 1003–1093; these read ESRS…ENQA and LPIN…KPND. Serine 923 and serine 1040 each carry phosphoserine. Composition is skewed to polar residues over residues 1028–1063 and 1082–1093; these read ANVN…NSRQ and SFTNFFQNKPND.

Belongs to the type I cytokine receptor family. Type 2 subfamily. As to quaternary structure, heterodimer composed of LIFR and IL6ST. The heterodimer formed by LIFR and IL6ST interacts with the complex formed by CNTF and CNTFR.

The protein localises to the cell membrane. Its function is as follows. Signal-transducing molecule. May have a common pathway with IL6ST. The soluble form inhibits the biological activity of LIF by blocking its binding to receptors on target cells. In Rattus norvegicus (Rat), this protein is Leukemia inhibitory factor receptor (Lifr).